Consider the following 232-residue polypeptide: Noggin (232 aa).

An N-terminal signal peptide occupies residues 1–27; sequence MERCPSLGVTLYALVVVLGLRATPAGG. N-linked (GlcNAc...) asparagine glycosylation occurs at N62. The segment at 77-96 is disordered; sequence GFMATSPPEDRPGGGGGAAG. 4 cysteine pairs are disulfide-bonded: C155–C192, C178–C228, C184–C230, and C207–C215.

The protein belongs to the noggin family. In terms of assembly, homodimer. Interacts with GDF5; inhibits chondrocyte differentiation.

The protein resides in the secreted. In terms of biological role, inhibitor of bone morphogenetic proteins (BMP) signaling which is required for growth and patterning of the neural tube and somite. Essential for cartilage morphogenesis and joint formation. Inhibits chondrocyte differentiation through its interaction with GDF5 and, probably, GDF6. In Homo sapiens (Human), this protein is Noggin (NOG).